We begin with the raw amino-acid sequence, 783 residues long: Cell wall transcription factor ACE2 (783 aa).

Disordered regions lie at residues 166–195 (AINTQSVSPGELLKRSRGSQTPTPTSALPD), 219–311 (EEEK…GNSY), 355–452 (YQKQ…IHQN), 474–497 (AEQPQPQPQPHQQQHQQQQHQPEL), and 535–624 (NQNQ…PRRR). 4 stretches are compositionally biased toward polar residues: residues 183–193 (GSQTPTPTSAL), 227–254 (QRMMTQSSPLKRVTTPSQSPFVQQPQTM), 302–311 (KSDSVGGNSY), and 355–371 (YQKQKPVTPPLQSQNDS). Residues 372 to 395 (QQLEPLKTPQPQPKQQQQQQQPNN) are compositionally biased toward low complexity. Residues 420-431 (INGSPDWNSSPE) show a composition bias toward polar residues. Low complexity-rich tracts occupy residues 483–497 (PHQQQHQQQQHQPEL) and 535–544 (NQNQNQNQNQ). A compositionally biased stretch (polar residues) spans 545-575 (TKTPYSQQSQFSPTHSNFNLSPAKQLNSNVG). 2 C2H2-type zinc fingers span residues 649-673 (YTCTYKNCGKKFTRRYNVRSHIQTH) and 679-701 (FGCQFCPKRFVRQHDLNRHVKGH).

It localises to the nucleus. Functionally, transcription factor involved in the RAM (regulation of ACE2 transcription factor and polarized morphogenesis) signaling network that regulates polarized morphogenesis. Regulates expression of genes involved in cell separation such as CHT3, DSE1, and SCW11; or other cell wall genes such as ASH1, DSE4, PIR1, PRY2, and RME1. Required for regulation of morphogenesis, cell separation, adherence, biofilm formation, invasion, as well as virulence in a mouse model of infection. This is Cell wall transcription factor ACE2 (ACE2) from Candida albicans (strain SC5314 / ATCC MYA-2876) (Yeast).